The sequence spans 248 residues: MSIVNISCYKFVTLNDREALKADLGARCLQLGLRGTILLAPEGINVFLAGTRAAIDAIVAGLRADPRFADLEPKLSLSAEAPFTRMRVRLKKEIITMKMPVVRPEEGRAPAVAAATLKRWLDQGCDDEGRPVVMLDTRNDYEVAAGSFENAVDYGIGVFSEFPPQLQRRRDDYAGKTVVSFCTGGIRCEKAAIHMQEIGVERVYQLEGGILKYFEEVGGAHYRGGCFVFDAREAVGADLQPLGGRVHC.

Residues Glu-128–Tyr-222 form the Rhodanese domain. The active-site Cysteine persulfide intermediate is the Cys-182.

It belongs to the TrhO family.

The enzyme catalyses uridine(34) in tRNA + AH2 + O2 = 5-hydroxyuridine(34) in tRNA + A + H2O. Catalyzes oxygen-dependent 5-hydroxyuridine (ho5U) modification at position 34 in tRNAs. This Thiobacillus denitrificans (strain ATCC 25259 / T1) protein is tRNA uridine(34) hydroxylase.